Here is a 92-residue protein sequence, read N- to C-terminus: Acylphosphatase (92 aa).

The Acylphosphatase-like domain maps to 3-92 (TKHVLVSGIV…GPRSTHFEVT (90 aa)). Residues Arg-18 and Asn-36 contribute to the active site.

Belongs to the acylphosphatase family.

It carries out the reaction an acyl phosphate + H2O = a carboxylate + phosphate + H(+). This is Acylphosphatase (acyP) from Alcanivorax borkumensis (strain ATCC 700651 / DSM 11573 / NCIMB 13689 / SK2).